The following is a 281-amino-acid chain: Beta-lactamase (281 aa).

The first 24 residues, 1–24, serve as a signal peptide directing secretion; the sequence is MKKLIFLIVIALVLSACNSNSSHA. Serine 63 functions as the Acyl-ester intermediate in the catalytic mechanism. 225–227 contributes to the substrate binding site; it reads KSG.

It belongs to the class-A beta-lactamase family.

The enzyme catalyses a beta-lactam + H2O = a substituted beta-amino acid. The polypeptide is Beta-lactamase (blaZ) (Staphylococcus aureus).